The primary structure comprises 86 residues: Large ribosomal subunit protein eL31 (86 aa).

The protein belongs to the eukaryotic ribosomal protein eL31 family.

This is Large ribosomal subunit protein eL31 from Methanopyrus kandleri (strain AV19 / DSM 6324 / JCM 9639 / NBRC 100938).